The chain runs to 329 residues: Probable carboxylesterase 13 (329 aa).

The residue at position 1 (M1) is an N-acetylmethionine. The short motif at 81–83 is the Involved in the stabilization of the negatively charged intermediate by the formation of the oxyanion hole element; that stretch reads HGG. Catalysis depends on residues S165, D269, and H302.

It belongs to the 'GDXG' lipolytic enzyme family. As to expression, expressed in flowers.

The enzyme catalyses a carboxylic ester + H2O = an alcohol + a carboxylate + H(+). Functionally, carboxylesterase acting on esters with varying acyl chain length. This chain is Probable carboxylesterase 13 (CXE13), found in Arabidopsis thaliana (Mouse-ear cress).